The chain runs to 689 residues: DNA ligase (689 aa).

NAD(+) is bound by residues 40–44, 89–90, and Glu-121; these read DSEYD and SL. Lys-123 serves as the catalytic N6-AMP-lysine intermediate. Residues Arg-144, Glu-179, Lys-295, and Lys-319 each coordinate NAD(+). Residues Cys-413, Cys-416, Cys-431, and Cys-437 each coordinate Zn(2+). A BRCT domain is found at 610-689; that stretch reads REQSSLTDKI…EEWLTLIKNV (80 aa).

It belongs to the NAD-dependent DNA ligase family. LigA subfamily. Mg(2+) serves as cofactor. Mn(2+) is required as a cofactor.

It catalyses the reaction NAD(+) + (deoxyribonucleotide)n-3'-hydroxyl + 5'-phospho-(deoxyribonucleotide)m = (deoxyribonucleotide)n+m + AMP + beta-nicotinamide D-nucleotide.. Its function is as follows. DNA ligase that catalyzes the formation of phosphodiester linkages between 5'-phosphoryl and 3'-hydroxyl groups in double-stranded DNA using NAD as a coenzyme and as the energy source for the reaction. It is essential for DNA replication and repair of damaged DNA. This chain is DNA ligase, found in Rickettsia rickettsii (strain Iowa).